Here is a 459-residue protein sequence, read N- to C-terminus: Cysteine--tRNA ligase (459 aa).

Cys28 contacts Zn(2+). Residues 30–40 (ITVYDLCHVGH) carry the 'HIGH' region motif. Positions 209, 234, and 238 each coordinate Zn(2+). The 'KMSKS' region signature appears at 266–270 (KMSKS). Lys269 is a binding site for ATP.

The protein belongs to the class-I aminoacyl-tRNA synthetase family. As to quaternary structure, monomer. Zn(2+) is required as a cofactor.

Its subcellular location is the cytoplasm. The enzyme catalyses tRNA(Cys) + L-cysteine + ATP = L-cysteinyl-tRNA(Cys) + AMP + diphosphate. This chain is Cysteine--tRNA ligase (cysS), found in Pasteurella multocida (strain Pm70).